The primary structure comprises 223 residues: Phosphoglycolate phosphatase (223 aa).

Catalysis depends on D10, which acts as the Nucleophile. D10 and D12 together coordinate Mg(2+). A substrate-binding site is contributed by K149. The Mg(2+) site is built by D172 and D176.

It belongs to the archaeal SPP-like hydrolase family. Requires Mg(2+) as cofactor.

The enzyme catalyses 2-phosphoglycolate + H2O = glycolate + phosphate. Its function is as follows. Catalyzes the dephosphorylation of 2-phosphoglycolate. In Archaeoglobus fulgidus (strain ATCC 49558 / DSM 4304 / JCM 9628 / NBRC 100126 / VC-16), this protein is Phosphoglycolate phosphatase.